Here is a 191-residue protein sequence, read N- to C-terminus: MLLLIDNYDSFTYNLYQYFCELGAEVVVKRNDELQLTDIERLAPQHLVISPGPCTPNEAGISVAAIRHFAGKLPILGVCLGHQALGQAFGAEVVRARAVMHGKTSAIRHLGVGVFRGLSDPLTVTRYHSLVLKADTLPDCFEVTAWSERDGVRDEIMGIRHRALALEGVQFHPESVLSEQGHQLLDNFLNR.

The Glutamine amidotransferase type-1 domain occupies methionine 1 to arginine 191. Residues cysteine 79, histidine 172, and glutamate 174 contribute to the active site.

In terms of assembly, monomer. Heterodimer consisting of two non-identical subunits: a glutamine amidotransferase subunit (PabA) and a aminodeoxychorismate synthase subunit (PabB).

The enzyme catalyses chorismate + L-glutamine = 4-amino-4-deoxychorismate + L-glutamate. It functions in the pathway cofactor biosynthesis; tetrahydrofolate biosynthesis; 4-aminobenzoate from chorismate: step 1/2. Functionally, part of a heterodimeric complex that catalyzes the two-step biosynthesis of 4-amino-4-deoxychorismate (ADC), a precursor of p-aminobenzoate (PABA) and tetrahydrofolate. In the first step, a glutamine amidotransferase (PabA) generates ammonia as a substrate that, along with chorismate, is used in the second step, catalyzed by aminodeoxychorismate synthase (PabB) to produce ADC. PabA converts glutamine into glutamate only in the presence of stoichiometric amounts of PabB. In Serratia marcescens, this protein is Aminodeoxychorismate synthase component 2 (pabA).